The primary structure comprises 162 residues: 2-C-methyl-D-erythritol 2,4-cyclodiphosphate synthase (162 aa).

2 residues coordinate a divalent metal cation: aspartate 9 and histidine 11. 4-CDP-2-C-methyl-D-erythritol 2-phosphate contacts are provided by residues 9-11 (DVH) and 35-36 (HS). Residue histidine 43 coordinates a divalent metal cation. 4-CDP-2-C-methyl-D-erythritol 2-phosphate is bound by residues 57–59 (DIG), 62–66 (FPDTD), 133–136 (TTTE), phenylalanine 140, and arginine 143.

The protein belongs to the IspF family. In terms of assembly, homotrimer. The cofactor is a divalent metal cation.

It carries out the reaction 4-CDP-2-C-methyl-D-erythritol 2-phosphate = 2-C-methyl-D-erythritol 2,4-cyclic diphosphate + CMP. It functions in the pathway isoprenoid biosynthesis; isopentenyl diphosphate biosynthesis via DXP pathway; isopentenyl diphosphate from 1-deoxy-D-xylulose 5-phosphate: step 4/6. Involved in the biosynthesis of isopentenyl diphosphate (IPP) and dimethylallyl diphosphate (DMAPP), two major building blocks of isoprenoid compounds. Catalyzes the conversion of 4-diphosphocytidyl-2-C-methyl-D-erythritol 2-phosphate (CDP-ME2P) to 2-C-methyl-D-erythritol 2,4-cyclodiphosphate (ME-CPP) with a corresponding release of cytidine 5-monophosphate (CMP). This chain is 2-C-methyl-D-erythritol 2,4-cyclodiphosphate synthase, found in Histophilus somni (strain 129Pt) (Haemophilus somnus).